The sequence spans 529 residues: Peptide chain release factor 3 (529 aa).

In terms of domain architecture, tr-type G spans 11-280 (AKRRTFAIIS…GLVKWAPAPM (270 aa)). GTP-binding positions include 20–27 (SHPDAGKT), 88–92 (DTPGH), and 142–145 (NKLD).

It belongs to the TRAFAC class translation factor GTPase superfamily. Classic translation factor GTPase family. PrfC subfamily.

The protein localises to the cytoplasm. In terms of biological role, increases the formation of ribosomal termination complexes and stimulates activities of RF-1 and RF-2. It binds guanine nucleotides and has strong preference for UGA stop codons. It may interact directly with the ribosome. The stimulation of RF-1 and RF-2 is significantly reduced by GTP and GDP, but not by GMP. In Photorhabdus laumondii subsp. laumondii (strain DSM 15139 / CIP 105565 / TT01) (Photorhabdus luminescens subsp. laumondii), this protein is Peptide chain release factor 3.